The primary structure comprises 341 residues: S-adenosylmethionine:tRNA ribosyltransferase-isomerase (341 aa).

The protein belongs to the QueA family. Monomer.

It localises to the cytoplasm. It carries out the reaction 7-aminomethyl-7-carbaguanosine(34) in tRNA + S-adenosyl-L-methionine = epoxyqueuosine(34) in tRNA + adenine + L-methionine + 2 H(+). It functions in the pathway tRNA modification; tRNA-queuosine biosynthesis. Its function is as follows. Transfers and isomerizes the ribose moiety from AdoMet to the 7-aminomethyl group of 7-deazaguanine (preQ1-tRNA) to give epoxyqueuosine (oQ-tRNA). This Clostridioides difficile (strain 630) (Peptoclostridium difficile) protein is S-adenosylmethionine:tRNA ribosyltransferase-isomerase.